The chain runs to 424 residues: Probable methyltransferase EP424R (424 aa).

One can recognise an Adrift-type SAM-dependent 2'-O-MTase domain in the interval 104–316; the sequence is QIVTNAWLKM…TYIVGKNRLR (213 aa). Residues Gly-136 and Asp-229 each contribute to the S-adenosyl-L-methionine site. Lys-269 functions as the Proton acceptor in the catalytic mechanism.

The protein resides in the virion. The sequence is that of Probable methyltransferase EP424R from African swine fever virus (strain Badajoz 1971 Vero-adapted) (Ba71V).